Reading from the N-terminus, the 429-residue chain is Phosphoribosylamine--glycine ligase (429 aa).

One can recognise an ATP-grasp domain in the interval 109 to 316 (KDFLARHNIP…LVELCLAACE (208 aa)). An ATP-binding site is contributed by 135–196 (LREKGAPIVI…EEFLDGEEAS (62 aa)). A disordered region spans residues 212-236 (SQDHKRVGDKDTGPNTGGMGAYSPA). Positions 213-223 (QDHKRVGDKDT) are enriched in basic and acidic residues. Positions 286 and 288 each coordinate Mg(2+).

The protein belongs to the GARS family. Monomer. It depends on Mg(2+) as a cofactor. Requires Mn(2+) as cofactor.

It catalyses the reaction 5-phospho-beta-D-ribosylamine + glycine + ATP = N(1)-(5-phospho-beta-D-ribosyl)glycinamide + ADP + phosphate + H(+). It participates in purine metabolism; IMP biosynthesis via de novo pathway; N(1)-(5-phospho-D-ribosyl)glycinamide from 5-phospho-alpha-D-ribose 1-diphosphate: step 2/2. In Escherichia coli O6:H1 (strain CFT073 / ATCC 700928 / UPEC), this protein is Phosphoribosylamine--glycine ligase.